The sequence spans 570 residues: AT-rich interactive domain-containing protein 3A (570 aa).

The segment at 102–215 (AGVPNSSSGH…LAPQAQSQHH (114 aa)) is disordered. The span at 120-160 (DIDDEDDEDDDPELDRGMDDEERDMDEDDSMNEGGGDEDLE) shows a compositional bias: acidic residues. Ser-179 is modified (phosphoserine). The region spanning 232–324 (DEKRKEFLDD…YLYPYECEKR (93 aa)) is the ARID domain. Residue Ser-356 is modified to Phosphoserine. The REKLES domain occupies 429-523 (AALEQLREKL…GVLFARKPAI (95 aa)). Residues 430 to 473 (ALEQLREKLESGEPPEKKVMLMAEEQQRIMQHALQQNLFAMATQ) form an important for nuclear localization region. A homodimerization region spans residues 475–495 (PMNIKLNNRDDRQETALNLST). The interval 519–531 (RKPAIGFMPSSQR) is important for cytoplasmic localization. The disordered stretch occupies residues 528 to 570 (SSQRVHHQHSSQGKSNSPGLSSHIQPSSSASSSASSHGPATSP). Phosphoserine is present on residues Ser-542 and Ser-569. A compositionally biased stretch (low complexity) spans 548–570 (SSHIQPSSSASSSASSHGPATSP).

Homodimer.

Its subcellular location is the nucleus. It localises to the cytoplasm. In terms of biological role, transcription factor. In Danio rerio (Zebrafish), this protein is AT-rich interactive domain-containing protein 3A (arid3a).